The sequence spans 218 residues: Pyridoxine/pyridoxamine 5'-phosphate oxidase (218 aa).

Substrate contacts are provided by residues 14–17 and Lys72; that span reads RREY. FMN is bound by residues 67 to 72, 82 to 83, Arg88, Lys89, and Gln111; these read RIVLLK and YT. 3 residues coordinate substrate: Tyr129, Arg133, and Ser137. FMN is bound by residues 146 to 147 and Trp191; that span reads QS. A substrate-binding site is contributed by 197–199; sequence RLH. Arg201 contributes to the FMN binding site.

It belongs to the pyridoxamine 5'-phosphate oxidase family. In terms of assembly, homodimer. Requires FMN as cofactor.

It carries out the reaction pyridoxamine 5'-phosphate + O2 + H2O = pyridoxal 5'-phosphate + H2O2 + NH4(+). It catalyses the reaction pyridoxine 5'-phosphate + O2 = pyridoxal 5'-phosphate + H2O2. Its pathway is cofactor metabolism; pyridoxal 5'-phosphate salvage; pyridoxal 5'-phosphate from pyridoxamine 5'-phosphate: step 1/1. It functions in the pathway cofactor metabolism; pyridoxal 5'-phosphate salvage; pyridoxal 5'-phosphate from pyridoxine 5'-phosphate: step 1/1. In terms of biological role, catalyzes the oxidation of either pyridoxine 5'-phosphate (PNP) or pyridoxamine 5'-phosphate (PMP) into pyridoxal 5'-phosphate (PLP). This chain is Pyridoxine/pyridoxamine 5'-phosphate oxidase, found in Klebsiella pneumoniae subsp. pneumoniae (strain ATCC 700721 / MGH 78578).